A 292-amino-acid polypeptide reads, in one-letter code: Recombination-promoting nuclease RpnA (292 aa).

Belongs to the Rpn/YhgA-like nuclease family. It depends on Mg(2+) as a cofactor.

Its activity is regulated as follows. Inhibited by EDTA, Zn(2+) and by Mg(2+) plus Mn(2+); stimulated by Ca(2+) in the presence of Mg(2+). In terms of biological role, a low activity DNA endonuclease yielding 3'-hydroxyl ends, equally active on ss or dsDNA, not active on dsRNA. Shows no sequence specificity. Upon expression enhances RecA-independent DNA recombination 49-fold, concomitantly reducing viability by 88% and probably inducing DNA damage as measured by induction of the SOS repair response in RecA cells. RecA-independent DNA recombination leads to replacement of recipient genes with large segments of donor DNA rather than DNA addition to the donor strain; increased expression of RpnA leads to smaller replacement segments, suggesting this protein may play a role in generating crossover events. This Escherichia coli (strain K12) protein is Recombination-promoting nuclease RpnA.